A 261-amino-acid polypeptide reads, in one-letter code: Calbindin (261 aa).

N-acetylalanine is present on A2. The interaction with RANBP9 stretch occupies residues 2 to 7 (AESHLQ). 5 EF-hand domains span residues 11–46 (ITAS…LQQA), 53–88 (ELSP…EENF), 98–133 (KSCE…LLEK), 142–177 (KLAE…QENF), and 186–221 (MCGK…LCEK). Residues D24, D26, S28, Y30, and E35 each coordinate Ca(2+). D111, D113, E122, D155, N157, D159, K161, E166, D199, D201, N203, Y205, and E210 together coordinate Ca(2+).

Belongs to the calbindin family. In terms of assembly, interacts with RANBP9.

In terms of biological role, buffers cytosolic calcium. May stimulate a membrane Ca(2+)-ATPase and a 3',5'-cyclic nucleotide phosphodiesterase. This chain is Calbindin (CALB1), found in Pongo abelii (Sumatran orangutan).